A 159-amino-acid polypeptide reads, in one-letter code: 2-C-methyl-D-erythritol 2,4-cyclodiphosphate synthase (159 aa).

Positions 8 and 10 each coordinate a divalent metal cation. 4-CDP-2-C-methyl-D-erythritol 2-phosphate is bound by residues 8–10 (DVH) and 34–35 (HS). Residue His42 participates in a divalent metal cation binding. Residues 56-58 (DIG), 61-65 (FPDTD), 100-106 (AQEPKMA), 132-135 (TTTE), Phe139, and Arg142 each bind 4-CDP-2-C-methyl-D-erythritol 2-phosphate.

The protein belongs to the IspF family. Homotrimer. It depends on a divalent metal cation as a cofactor.

It carries out the reaction 4-CDP-2-C-methyl-D-erythritol 2-phosphate = 2-C-methyl-D-erythritol 2,4-cyclic diphosphate + CMP. Its pathway is isoprenoid biosynthesis; isopentenyl diphosphate biosynthesis via DXP pathway; isopentenyl diphosphate from 1-deoxy-D-xylulose 5-phosphate: step 4/6. Functionally, involved in the biosynthesis of isopentenyl diphosphate (IPP) and dimethylallyl diphosphate (DMAPP), two major building blocks of isoprenoid compounds. Catalyzes the conversion of 4-diphosphocytidyl-2-C-methyl-D-erythritol 2-phosphate (CDP-ME2P) to 2-C-methyl-D-erythritol 2,4-cyclodiphosphate (ME-CPP) with a corresponding release of cytidine 5-monophosphate (CMP). This is 2-C-methyl-D-erythritol 2,4-cyclodiphosphate synthase from Alkaliphilus metalliredigens (strain QYMF).